The following is a 299-amino-acid chain: Taste receptor type 2 member 19 (299 aa).

Residue Met1 is a topological domain, extracellular. The chain crosses the membrane as a helical span at residues 2 to 22; it reads MCFLLIILSILVVFAFVLGNF. Residues 23–55 lie on the Cytoplasmic side of the membrane; sequence SNGFIALVNVIDWVNTRKISSADQILTALVVSR. The chain crosses the membrane as a helical span at residues 56-76; it reads IGLLWVMLFLWYATVFNSALY. Residues 77–87 are Extracellular-facing; sequence GLEVRIVASNA. The helical transmembrane segment at 88 to 108 threads the bilayer; it reads WAVMNHFSIWLAASLSIFCLL. Over 109-127 the chain is Cytoplasmic; sequence KIANFSNLIFLHLKKRIKS. A helical transmembrane segment spans residues 128 to 148; it reads VVLVILLGPLVFLICNLAVIT. Topologically, residues 149–181 are extracellular; the sequence is MDERVWTKEYEGNVTWKIKLRNAIQLSSLTVTT. Asn161 carries N-linked (GlcNAc...) asparagine glycosylation. Residues 182–202 form a helical membrane-spanning segment; that stretch reads LANLIPFTLSLICFLLLICSL. Topologically, residues 203-226 are cytoplasmic; that stretch reads CKHLKKMRLHSKGSQDPSTKVHIK. Residues 227-247 form a helical membrane-spanning segment; the sequence is ALQTVTSFLMLFAIYFLCIIT. The Extracellular segment spans residues 248–259; sequence STWNLRTQQSKL. A helical transmembrane segment spans residues 260-280; sequence VLLLCQTVAIMYPSFHSFILI. Over 281–299 the chain is Cytoplasmic; the sequence is MGSRKLKQTFLSVLWQMTR.

Belongs to the G-protein coupled receptor T2R family.

The protein resides in the membrane. Receptor that may play a role in the perception of bitterness and is gustducin-linked. May play a role in sensing the chemical composition of the gastrointestinal content. The activity of this receptor may stimulate alpha gustducin, mediate PLC-beta-2 activation and lead to the gating of TRPM5. This chain is Taste receptor type 2 member 19 (TAS2R19), found in Pan paniscus (Pygmy chimpanzee).